Here is a 309-residue protein sequence, read N- to C-terminus: Prephenate dehydratase (309 aa).

The Prephenate dehydratase domain maps to 3–191; sequence GIAYLGPEGT…ARTRFVLVGC (189 aa). Positions 205–282 constitute an ACT domain; it reads SVVLRLDNVP…ADVRYLGSWP (78 aa).

Homodimer.

It catalyses the reaction prephenate + H(+) = 3-phenylpyruvate + CO2 + H2O. It functions in the pathway amino-acid biosynthesis; L-phenylalanine biosynthesis; phenylpyruvate from prephenate: step 1/1. This Mycolicibacterium gilvum (strain PYR-GCK) (Mycobacterium gilvum (strain PYR-GCK)) protein is Prephenate dehydratase (pheA).